Here is a 210-residue protein sequence, read N- to C-terminus: MSDAKELKQVLTGPIVNNNPIALQILGVCSALAVTSKLETALVMALALTAVTAFSNLFISLIRNHIPSSVRIIVQMTIIASLVIVVDQLLQAYAYQISKQLSVFVGLIITNCIVMGRAEAYAMKTPPMMSFMDGIGNGLGYGVILLAVGFVRELFGNGSLFGVQILHKISEGGWYQPNGMLLLPPSAFFLIGILIWIIRTYKPEQVEAKG.

The next 6 membrane-spanning stretches (helical) occupy residues 14-34 (PIVN…ALAV), 42-62 (LVMA…ISLI), 72-92 (IIVQ…LLQA), 103-123 (VFVG…AYAM), 131-151 (FMDG…VGFV), and 178-198 (NGML…IWII).

This sequence belongs to the NqrDE/RnfAE family. As to quaternary structure, composed of six subunits; NqrA, NqrB, NqrC, NqrD, NqrE and NqrF.

The protein localises to the cell inner membrane. It catalyses the reaction a ubiquinone + n Na(+)(in) + NADH + H(+) = a ubiquinol + n Na(+)(out) + NAD(+). Functionally, NQR complex catalyzes the reduction of ubiquinone-1 to ubiquinol by two successive reactions, coupled with the transport of Na(+) ions from the cytoplasm to the periplasm. NqrA to NqrE are probably involved in the second step, the conversion of ubisemiquinone to ubiquinol. The polypeptide is Na(+)-translocating NADH-quinone reductase subunit D (Shewanella putrefaciens (strain CN-32 / ATCC BAA-453)).